The primary structure comprises 162 residues: Cytochrome c-type biogenesis protein CcmE (162 aa).

The Cytoplasmic portion of the chain corresponds to 1–13 (MSFWPQSRKARRR). The chain crosses the membrane as a helical; Signal-anchor for type II membrane protein span at residues 14–34 (LTILLAIAPVLALAVGLALYG). The Periplasmic portion of the chain corresponds to 35-162 (LRDSISLFYT…DAPAYGSQKP (128 aa)). The heme site is built by His-128 and Tyr-132. The segment covering 140–151 (ALKEQGEWRGEG) has biased composition (basic and acidic residues). The segment at 140–162 (ALKEQGEWRGEGADAPAYGSQKP) is disordered.

Belongs to the CcmE/CycJ family.

Its subcellular location is the cell inner membrane. In terms of biological role, heme chaperone required for the biogenesis of c-type cytochromes. Transiently binds heme delivered by CcmC and transfers the heme to apo-cytochromes in a process facilitated by CcmF and CcmH. In Caulobacter vibrioides (strain ATCC 19089 / CIP 103742 / CB 15) (Caulobacter crescentus), this protein is Cytochrome c-type biogenesis protein CcmE.